Reading from the N-terminus, the 194-residue chain is Putative 3-methyladenine DNA glycosylase (194 aa).

Belongs to the DNA glycosylase MPG family.

This Myxococcus xanthus (strain DK1622) protein is Putative 3-methyladenine DNA glycosylase.